The chain runs to 96 residues: MEIKTTAVAGTLESSDIQIMLMAGDNGIQIDLESDVIKQFGAQIKHVITTTLQQLNIDNVKVRAVDKGALDCVIKARTITAAQRALETTTPAWEVL.

At S14 the chain carries O-(phosphoribosyl dephospho-coenzyme A)serine.

It belongs to the CitD family. As to quaternary structure, oligomer with a subunit composition of (alpha,beta,gamma)6.

The protein localises to the cytoplasm. Covalent carrier of the coenzyme of citrate lyase. The sequence is that of Citrate lyase acyl carrier protein from Lactiplantibacillus plantarum (strain ATCC BAA-793 / NCIMB 8826 / WCFS1) (Lactobacillus plantarum).